The chain runs to 373 residues: uncharacterized protein (373 aa).

The helical transmembrane segment at 180-202 (YYVVALGTLALGSILGYTAKYVW) threads the bilayer.

Its subcellular location is the membrane. This is an uncharacterized protein from Rickettsia prowazekii (strain Madrid E).